A 147-amino-acid polypeptide reads, in one-letter code: Large ribosomal subunit protein uL15 (147 aa).

The segment at 1–55 is disordered; that stretch reads MKLHEIAPQPGSTKRRRRVGRGVSAGQGASCGLGMRGQKSRSGTGTRPGFEGGQM. Residues 23–35 show a composition bias toward gly residues; sequence VSAGQGASCGLGM.

Belongs to the universal ribosomal protein uL15 family. As to quaternary structure, part of the 50S ribosomal subunit.

Binds to the 23S rRNA. The protein is Large ribosomal subunit protein uL15 of Microcystis aeruginosa (strain NIES-843 / IAM M-2473).